We begin with the raw amino-acid sequence, 445 residues long: Probable multidrug resistance protein YpnP (445 aa).

The next 12 helical transmembrane spans lie at 15–35 (LVLF…FQFI), 49–69 (LGAA…ILGL), 95–115 (AFVV…FFLS), 136–156 (LQIQ…STVL), 168–188 (FIAF…SVFR), 194–214 (AAYS…FYVI), 240–260 (IPAG…MSVV), 277–297 (LDSI…SMAG), 314–334 (LGVI…WVFG), 355–375 (LKWI…NGIV), 384–404 (VLVL…ALFS), and 411–431 (GIGL…FLYY).

Belongs to the multi antimicrobial extrusion (MATE) (TC 2.A.66.1) family.

The protein localises to the cell membrane. The chain is Probable multidrug resistance protein YpnP (ypnP) from Bacillus subtilis (strain 168).